Consider the following 267-residue polypeptide: MSLSLDGVDLVHADGQRALADIRLRLAAGERVALIGPSGAGKTSLLRVLASQWRPSAGRVELLGEEPWALSAAARQRLRARIGLVHQAPPLPPRQRVVSAVLAGRLGQWPLWKSLVSLVYPLDRAGAHDALQRLDLGDKLFQRCDQLSGGQLQRVGIARVLYQRAELILADEPVSAMDPVLAGHTLALLNREAAARGSTLLASLHAVDLALQHFPRVIGLRAGRIAFDLPAGEVDRAALDALYANEQLQAERASPAGEPAVMHIPRC.

An ABC transporter domain is found at 3–247; the sequence is LSLDGVDLVH…ALDALYANEQ (245 aa). 36–43 lines the ATP pocket; it reads GPSGAGKT.

Belongs to the ABC transporter superfamily. Phosphonates importer (TC 3.A.1.9.1) family. The complex is composed of two ATP-binding proteins (PhnC), two transmembrane proteins (PhnE) and a solute-binding protein (PhnD).

The protein resides in the cell inner membrane. It catalyses the reaction phosphonate(out) + ATP + H2O = phosphonate(in) + ADP + phosphate + H(+). Functionally, part of the ABC transporter complex PhnCDE involved in phosphonates import. Responsible for energy coupling to the transport system. This chain is Phosphonates import ATP-binding protein PhnC 1, found in Pseudomonas aeruginosa (strain ATCC 15692 / DSM 22644 / CIP 104116 / JCM 14847 / LMG 12228 / 1C / PRS 101 / PAO1).